The following is a 227-amino-acid chain: Ribosomal RNA large subunit methyltransferase E (227 aa).

Positions 78, 80, 103, 119, and 143 each coordinate S-adenosyl-L-methionine. K183 (proton acceptor) is an active-site residue.

This sequence belongs to the class I-like SAM-binding methyltransferase superfamily. RNA methyltransferase RlmE family.

It is found in the cytoplasm. It carries out the reaction uridine(2552) in 23S rRNA + S-adenosyl-L-methionine = 2'-O-methyluridine(2552) in 23S rRNA + S-adenosyl-L-homocysteine + H(+). Its function is as follows. Specifically methylates the uridine in position 2552 of 23S rRNA at the 2'-O position of the ribose in the fully assembled 50S ribosomal subunit. This chain is Ribosomal RNA large subunit methyltransferase E, found in Rickettsia typhi (strain ATCC VR-144 / Wilmington).